The sequence spans 279 residues: 4-hydroxy-3-methylbut-2-enyl diphosphate reductase (279 aa).

Cysteine 12 contacts [4Fe-4S] cluster. (2E)-4-hydroxy-3-methylbut-2-enyl diphosphate-binding residues include histidine 40 and histidine 72. The dimethylallyl diphosphate site is built by histidine 40 and histidine 72. Positions 40 and 72 each coordinate isopentenyl diphosphate. Cysteine 94 serves as a coordination point for [4Fe-4S] cluster. Histidine 122 is a (2E)-4-hydroxy-3-methylbut-2-enyl diphosphate binding site. A dimethylallyl diphosphate-binding site is contributed by histidine 122. Histidine 122 is an isopentenyl diphosphate binding site. Catalysis depends on glutamate 124, which acts as the Proton donor. Threonine 161 is a (2E)-4-hydroxy-3-methylbut-2-enyl diphosphate binding site. Cysteine 189 contributes to the [4Fe-4S] cluster binding site. (2E)-4-hydroxy-3-methylbut-2-enyl diphosphate-binding residues include serine 217, asparagine 219, and serine 261. 3 residues coordinate dimethylallyl diphosphate: serine 217, asparagine 219, and serine 261. Positions 217, 219, and 261 each coordinate isopentenyl diphosphate.

It belongs to the IspH family. [4Fe-4S] cluster serves as cofactor.

It carries out the reaction isopentenyl diphosphate + 2 oxidized [2Fe-2S]-[ferredoxin] + H2O = (2E)-4-hydroxy-3-methylbut-2-enyl diphosphate + 2 reduced [2Fe-2S]-[ferredoxin] + 2 H(+). The catalysed reaction is dimethylallyl diphosphate + 2 oxidized [2Fe-2S]-[ferredoxin] + H2O = (2E)-4-hydroxy-3-methylbut-2-enyl diphosphate + 2 reduced [2Fe-2S]-[ferredoxin] + 2 H(+). The protein operates within isoprenoid biosynthesis; dimethylallyl diphosphate biosynthesis; dimethylallyl diphosphate from (2E)-4-hydroxy-3-methylbutenyl diphosphate: step 1/1. Its pathway is isoprenoid biosynthesis; isopentenyl diphosphate biosynthesis via DXP pathway; isopentenyl diphosphate from 1-deoxy-D-xylulose 5-phosphate: step 6/6. Its function is as follows. Catalyzes the conversion of 1-hydroxy-2-methyl-2-(E)-butenyl 4-diphosphate (HMBPP) into a mixture of isopentenyl diphosphate (IPP) and dimethylallyl diphosphate (DMAPP). Acts in the terminal step of the DOXP/MEP pathway for isoprenoid precursor biosynthesis. This Syntrophotalea carbinolica (strain DSM 2380 / NBRC 103641 / GraBd1) (Pelobacter carbinolicus) protein is 4-hydroxy-3-methylbut-2-enyl diphosphate reductase.